We begin with the raw amino-acid sequence, 341 residues long: MPGPLLKTLQGENISRRPIWLMRQAGRYLPEYRELRAEKGGFLALVYDTDAAAEVTVQPIRRFGFDGAILFSDILIVPYAMGQDLQFLAGEGPHLSPRLLDAALNSLVAVPGRLSPIYETVAKVKAQLSPETTLLGFAGSPWTVATYMVAGEGSRDHHDTRALAYRDPSAFQAIIDAITEVTIEYLSGQVEAGAEGLQLFDSWSGSLAPAEFERWVIAPNARIASAMQQRYPHVPVIGFPKGAGEKLSAYARETGVNAVGVDETIDPLWAARELPANMPVQGNLDPLLLLSGGPELERQTIRVLEAFADRPHVFNLGHGIGQHTPIENVEALLKIVRGWSR.

Residues 23–27, Asp-73, Tyr-147, Ser-202, and His-318 each bind substrate; that span reads RQAGR.

This sequence belongs to the uroporphyrinogen decarboxylase family. As to quaternary structure, homodimer.

Its subcellular location is the cytoplasm. The enzyme catalyses uroporphyrinogen III + 4 H(+) = coproporphyrinogen III + 4 CO2. The protein operates within porphyrin-containing compound metabolism; protoporphyrin-IX biosynthesis; coproporphyrinogen-III from 5-aminolevulinate: step 4/4. In terms of biological role, catalyzes the decarboxylation of four acetate groups of uroporphyrinogen-III to yield coproporphyrinogen-III. The polypeptide is Uroporphyrinogen decarboxylase (Novosphingobium aromaticivorans (strain ATCC 700278 / DSM 12444 / CCUG 56034 / CIP 105152 / NBRC 16084 / F199)).